A 345-amino-acid polypeptide reads, in one-letter code: Phosphoribosylformylglycinamidine cyclo-ligase (345 aa).

The protein belongs to the AIR synthase family.

Its subcellular location is the cytoplasm. It carries out the reaction 2-formamido-N(1)-(5-O-phospho-beta-D-ribosyl)acetamidine + ATP = 5-amino-1-(5-phospho-beta-D-ribosyl)imidazole + ADP + phosphate + H(+). It functions in the pathway purine metabolism; IMP biosynthesis via de novo pathway; 5-amino-1-(5-phospho-D-ribosyl)imidazole from N(2)-formyl-N(1)-(5-phospho-D-ribosyl)glycinamide: step 2/2. This chain is Phosphoribosylformylglycinamidine cyclo-ligase, found in Anaeromyxobacter sp. (strain K).